A 434-amino-acid polypeptide reads, in one-letter code: Chaperone SurA (434 aa).

The N-terminal stretch at 1–22 is a signal peptide; sequence MKPSKHLIFALFALAISQPTMA. 2 consecutive PpiC domains span residues 173–274 and 283–383; these read DVEY…KIMD and IEEV…QLEE.

The protein localises to the periplasm. The enzyme catalyses [protein]-peptidylproline (omega=180) = [protein]-peptidylproline (omega=0). Chaperone involved in the correct folding and assembly of outer membrane proteins. Recognizes specific patterns of aromatic residues and the orientation of their side chains, which are found more frequently in integral outer membrane proteins. May act in both early periplasmic and late outer membrane-associated steps of protein maturation. This is Chaperone SurA from Shewanella sp. (strain MR-4).